We begin with the raw amino-acid sequence, 146 residues long: MPEHILSGIKAIVAMKLRRKGLLQKEIAKIIKSDRSIVSHYLSGRYPKEKILNVAKIIEEMPPQYGAKFIHSLTDNKELAKNLIKELYGIKLFWDENSCIACGSCLGCAALTLDNFTVGIDEDTCHLCASCIFRCPTNSLKFIKEE.

2 consecutive 4Fe-4S ferredoxin-type domains span residues 90–115 and 116–145; these read IKLF…TLDN and FTVG…FIKE. C125, C128, C131, and C135 together coordinate [4Fe-4S] cluster.

[4Fe-4S] cluster serves as cofactor.

This Methanocaldococcus jannaschii (strain ATCC 43067 / DSM 2661 / JAL-1 / JCM 10045 / NBRC 100440) (Methanococcus jannaschii) protein is Ferredoxin-type protein FwdE (fwdE).